Reading from the N-terminus, the 113-residue chain is uncharacterized protein (113 aa).

Residues 1-20 (MMKKSILAFLLLTSSAAALA) form the signal peptide.

This is an uncharacterized protein from Escherichia coli (strain K12).